The chain runs to 180 residues: MLTRKQKELLVEELSAIFEKSSLILFSDYKGLNVEQITKLRRKLREKLANGARYRVIKNSVAYLALKKAGYSVDEIEEVFSGPLAILYVEEGDPIEAIKIIYDFSKETKGLPSFKGLYLDGRFFDAEEVENLSKLPSKEQLLAMVVSGVQGPIRGFVNVLSGTLKSLLYALNAIKDKKSE.

The protein belongs to the universal ribosomal protein uL10 family. In terms of assembly, part of the ribosomal stalk of the 50S ribosomal subunit. The N-terminus interacts with L11 and the large rRNA to form the base of the stalk. The C-terminus forms an elongated spine to which L12 dimers bind in a sequential fashion forming a multimeric L10(L12)X complex.

In terms of biological role, forms part of the ribosomal stalk, playing a central role in the interaction of the ribosome with GTP-bound translation factors. In Thermosipho melanesiensis (strain DSM 12029 / CIP 104789 / BI429), this protein is Large ribosomal subunit protein uL10.